We begin with the raw amino-acid sequence, 434 residues long: Chaperone SurA (434 aa).

Positions methionine 1–alanine 29 are cleaved as a signal peptide. 2 PpiC domains span residues alanine 180–glutamate 281 and valine 290–aspartate 389.

It is found in the periplasm. The enzyme catalyses [protein]-peptidylproline (omega=180) = [protein]-peptidylproline (omega=0). Its function is as follows. Chaperone involved in the correct folding and assembly of outer membrane proteins. Recognizes specific patterns of aromatic residues and the orientation of their side chains, which are found more frequently in integral outer membrane proteins. May act in both early periplasmic and late outer membrane-associated steps of protein maturation. The sequence is that of Chaperone SurA from Hahella chejuensis (strain KCTC 2396).